Here is a 156-residue protein sequence, read N- to C-terminus: Small ribosomal subunit protein uS7 (156 aa).

Belongs to the universal ribosomal protein uS7 family. Part of the 30S ribosomal subunit. Contacts proteins S9 and S11.

Functionally, one of the primary rRNA binding proteins, it binds directly to 16S rRNA where it nucleates assembly of the head domain of the 30S subunit. Is located at the subunit interface close to the decoding center, probably blocks exit of the E-site tRNA. In Citrobacter koseri (strain ATCC BAA-895 / CDC 4225-83 / SGSC4696), this protein is Small ribosomal subunit protein uS7.